We begin with the raw amino-acid sequence, 100 residues long: NADH-quinone oxidoreductase subunit K 2 (100 aa).

3 helical membrane passes run 4-24, 29-49, and 60-80; these read LNNY…GVLV, IVIF…FIAF, and IFVF…LALM.

The protein belongs to the complex I subunit 4L family. As to quaternary structure, NDH-1 is composed of 14 different subunits. Subunits NuoA, H, J, K, L, M, N constitute the membrane sector of the complex.

Its subcellular location is the cell inner membrane. It carries out the reaction a quinone + NADH + 5 H(+)(in) = a quinol + NAD(+) + 4 H(+)(out). NDH-1 shuttles electrons from NADH, via FMN and iron-sulfur (Fe-S) centers, to quinones in the respiratory chain. The immediate electron acceptor for the enzyme in this species is believed to be ubiquinone. Couples the redox reaction to proton translocation (for every two electrons transferred, four hydrogen ions are translocated across the cytoplasmic membrane), and thus conserves the redox energy in a proton gradient. This chain is NADH-quinone oxidoreductase subunit K 2, found in Geotalea uraniireducens (strain Rf4) (Geobacter uraniireducens).